The sequence spans 255 residues: Indole-3-glycerol phosphate synthase (255 aa).

This sequence belongs to the TrpC family.

The catalysed reaction is 1-(2-carboxyphenylamino)-1-deoxy-D-ribulose 5-phosphate + H(+) = (1S,2R)-1-C-(indol-3-yl)glycerol 3-phosphate + CO2 + H2O. It functions in the pathway amino-acid biosynthesis; L-tryptophan biosynthesis; L-tryptophan from chorismate: step 4/5. The sequence is that of Indole-3-glycerol phosphate synthase from Streptococcus pneumoniae serotype 19F (strain G54).